A 457-amino-acid polypeptide reads, in one-letter code: MSNSAKSVVILAAGKGTRMYSDLPKVLHLLAGKPMVQHVIDTAMALGAKNVHLVYGHGGDLIEQTLSDQTLNWVLQAEQLGTGHAMQQAAPHFAGDEDILILYGDVPLIGADTLERLLAVKPEGGIGLLTAILDNPTGYGRIVRENGEVTGIIEQKDATEEQRKINEINTGILVANGSDLKRWLSQLDNNNVQGEYYLTDVIALAYKEGRKIEAVHPTRLSEMEGVNNRLQLSALERIYQSEQAEQLLLAGVMLLDPARFDLRGTLIHGRDVVIDTNVIIEGNVTLGNNVQIGTGCVLKNCIIGDDSIISPYTIVEDSEMETGCTVGPFARLRPGSKLAEKAHVGNFVEMKKSYLGKGSKAGHLTYLGDADIGRDVNIGAGTITCNYDGANKFKTIIGDNVFVGSDTQLVAPVIVAKGATIGAGTTVTKNIAENELVVSRTKQTHIQGWKRPVKEKK.

A pyrophosphorylase region spans residues Met1–Arg229. UDP-N-acetyl-alpha-D-glucosamine is bound by residues Leu11 to Gly14, Lys25, Gln76, Gly81 to Thr82, Tyr103 to Asp105, Gly140, Glu154, Asn169, and Asn227. A Mg(2+)-binding site is contributed by Asp105. A Mg(2+)-binding site is contributed by Asn227. The segment at Leu230–Ala250 is linker. The segment at Gly251–Lys457 is N-acetyltransferase. Positions 333 and 351 each coordinate UDP-N-acetyl-alpha-D-glucosamine. Residue His363 is the Proton acceptor of the active site. Residues Tyr366 and Asn377 each coordinate UDP-N-acetyl-alpha-D-glucosamine. Acetyl-CoA is bound by residues Ala380, Asn386–Tyr387, Ser405, Ala423, and Arg440.

The protein in the N-terminal section; belongs to the N-acetylglucosamine-1-phosphate uridyltransferase family. In the C-terminal section; belongs to the transferase hexapeptide repeat family. As to quaternary structure, homotrimer. Mg(2+) is required as a cofactor.

It is found in the cytoplasm. The enzyme catalyses alpha-D-glucosamine 1-phosphate + acetyl-CoA = N-acetyl-alpha-D-glucosamine 1-phosphate + CoA + H(+). It carries out the reaction N-acetyl-alpha-D-glucosamine 1-phosphate + UTP + H(+) = UDP-N-acetyl-alpha-D-glucosamine + diphosphate. It participates in nucleotide-sugar biosynthesis; UDP-N-acetyl-alpha-D-glucosamine biosynthesis; N-acetyl-alpha-D-glucosamine 1-phosphate from alpha-D-glucosamine 6-phosphate (route II): step 2/2. The protein operates within nucleotide-sugar biosynthesis; UDP-N-acetyl-alpha-D-glucosamine biosynthesis; UDP-N-acetyl-alpha-D-glucosamine from N-acetyl-alpha-D-glucosamine 1-phosphate: step 1/1. It functions in the pathway bacterial outer membrane biogenesis; LPS lipid A biosynthesis. Functionally, catalyzes the last two sequential reactions in the de novo biosynthetic pathway for UDP-N-acetylglucosamine (UDP-GlcNAc). The C-terminal domain catalyzes the transfer of acetyl group from acetyl coenzyme A to glucosamine-1-phosphate (GlcN-1-P) to produce N-acetylglucosamine-1-phosphate (GlcNAc-1-P), which is converted into UDP-GlcNAc by the transfer of uridine 5-monophosphate (from uridine 5-triphosphate), a reaction catalyzed by the N-terminal domain. The polypeptide is Bifunctional protein GlmU (Photorhabdus laumondii subsp. laumondii (strain DSM 15139 / CIP 105565 / TT01) (Photorhabdus luminescens subsp. laumondii)).